The chain runs to 353 residues: Sorbitol dehydrogenase (353 aa).

A Zn(2+)-binding site is contributed by cysteine 45. A substrate-binding site is contributed by tyrosine 51. The Zn(2+) site is built by histidine 70 and glutamate 71. Residue glutamate 156 coordinates substrate. NAD(+) contacts are provided by residues valine 184, aspartate 204, arginine 209, 271–273, and 296–298; these read VGL and IFR. Substrate is bound by residues arginine 298 and tyrosine 299.

It belongs to the zinc-containing alcohol dehydrogenase family. In terms of assembly, homotetramer. Zn(2+) serves as cofactor.

The catalysed reaction is keto-D-fructose + NADH + H(+) = D-sorbitol + NAD(+). The enzyme catalyses xylitol + NAD(+) = D-xylulose + NADH + H(+). It carries out the reaction L-iditol + NAD(+) = keto-L-sorbose + NADH + H(+). Its function is as follows. Polyol dehydrogenase that catalyzes the NAD(+)-dependent oxidation of various sugar alcohols. Is mostly active with D-sorbitol (D-glucitol), xylitol and L-iditol as substrates, leading to the C2-oxidized products D-fructose, D-xylulose and L-sorbose, respectively. The sequence is that of Sorbitol dehydrogenase from Bacillus subtilis (strain 168).